Consider the following 195-residue polypeptide: MTKIIGLTGGIASGKSTVTKIIRESGFKVIDADQVVHKLQAKGGKLYQALLEWLGPEILDADGELDRPKLSQMIFANPDNMKTSARLQNSIIRQELACQRDQLKQTEEIFFMDIPLLIEEKYIKWFDEIWLVFVDKEKQLQRLMARNNYSREEAELRLSHQMPLTDKKSFASLIIDNNGDLITLKEQILDALQRL.

The region spanning 4–195 is the DPCK domain; the sequence is IIGLTGGIAS…EQILDALQRL (192 aa). Residue 12 to 17 coordinates ATP; that stretch reads ASGKST.

It belongs to the CoaE family.

Its subcellular location is the cytoplasm. The catalysed reaction is 3'-dephospho-CoA + ATP = ADP + CoA + H(+). It functions in the pathway cofactor biosynthesis; coenzyme A biosynthesis; CoA from (R)-pantothenate: step 5/5. Its function is as follows. Catalyzes the phosphorylation of the 3'-hydroxyl group of dephosphocoenzyme A to form coenzyme A. This chain is Dephospho-CoA kinase, found in Streptococcus agalactiae serotype Ia (strain ATCC 27591 / A909 / CDC SS700).